The sequence spans 243 residues: DNA repair protein RecO (243 aa).

Belongs to the RecO family.

Involved in DNA repair and RecF pathway recombination. In Caulobacter vibrioides (strain NA1000 / CB15N) (Caulobacter crescentus), this protein is DNA repair protein RecO.